We begin with the raw amino-acid sequence, 473 residues long: Spliceosome-associated protein CWC27 homolog (473 aa).

Ser-2 is modified (N-acetylserine). The PPIase cyclophilin-type domain maps to 11–166 (TNGKVLLKTT…NSHKIRSCEV (156 aa)). Positions 178 to 193 (EIKKPKKEKPEEEVKK) are enriched in basic and acidic residues. 3 disordered regions span residues 178 to 197 (EIKK…LKPK), 203 to 383 (SLLS…TSRE), and 401 to 473 (IAET…KERR). Residues 206–230 (SFGEEAEEEEEEVNRVSQSMKGKSK) are a coiled coil. Positions 231-241 (SSHDLLKDDPH) are enriched in basic and acidic residues. The Cell attachment site signature appears at 252-254 (RGD). The segment covering 256 to 266 (AEDSDDDGEYE) has biased composition (acidic residues). Composition is skewed to basic and acidic residues over residues 267-348 (GAEH…KRSE) and 360-372 (EYRR…EALR). The stretch at 311–378 (VSRSEELRKE…EALRKQQAKT (68 aa)) forms a coiled coil. Ser-347 bears the Phosphoserine mark. A compositionally biased stretch (acidic residues) spans 405-419 (PENDISETEVEDDEG). Composition is skewed to basic and acidic residues over residues 426–438 (QFED…KDAS) and 458–473 (RREE…KERR).

The protein belongs to the cyclophilin-type PPIase family. As to quaternary structure, part of the activated spliceosome B/catalytic step 1 spliceosome, one of the forms of the spliceosome which has a well-formed active site but still cannot catalyze the branching reaction and is composed at least of 52 proteins, the U2, U5 and U6 snRNAs and the pre-mRNA. Recruited during early steps of activated spliceosome B maturation, it is probably one of the first proteins released from this complex as he matures to the spliceosome C complex. Component of the minor spliceosome, which splices U12-type introns.

Its subcellular location is the nucleus. In terms of biological role, as part of the spliceosome, plays a role in pre-mRNA splicing. Probable inactive PPIase with no peptidyl-prolyl cis-trans isomerase activity. As a component of the minor spliceosome, involved in the splicing of U12-type introns in pre-mRNAs. This chain is Spliceosome-associated protein CWC27 homolog, found in Bos taurus (Bovine).